The chain runs to 295 residues: Glutamyl-Q tRNA(Asp) synthetase (295 aa).

Residues 9-13 (RFAPT) and Glu45 each bind L-glutamate. The 'HIGH' region motif lies at 12–22 (PTPSGFLHFGS). Zn(2+) contacts are provided by Cys101, Cys103, Tyr115, and Cys119. Positions 172 and 190 each coordinate L-glutamate. Residues 228 to 232 (KLGKS) carry the 'KMSKS' region motif. Residue Lys231 participates in ATP binding.

This sequence belongs to the class-I aminoacyl-tRNA synthetase family. GluQ subfamily. The cofactor is Zn(2+).

Its function is as follows. Catalyzes the tRNA-independent activation of glutamate in presence of ATP and the subsequent transfer of glutamate onto a tRNA(Asp). Glutamate is transferred on the 2-amino-5-(4,5-dihydroxy-2-cyclopenten-1-yl) moiety of the queuosine in the wobble position of the QUC anticodon. The chain is Glutamyl-Q tRNA(Asp) synthetase from Pseudomonas putida (strain W619).